The primary structure comprises 491 residues: Zinc finger protein 655 (491 aa).

The tract at residues 1–52 (MEEIPAQEAAGSPRVQFQSLETQSECLSPEPQFVQDTDMEQGLTGDGETREE) is disordered. Residues 15–26 (VQFQSLETQSEC) show a composition bias toward polar residues. Q60 carries the phosphoserine modification. Glycyl lysine isopeptide (Lys-Gly) (interchain with G-Cter in SUMO2) cross-links involve residues K77, K190, and K201. C2H2-type zinc fingers lie at residues 212-234 (YKCD…QRIH), 240-262 (YKCK…KRIH), 303-325 (YKCS…QKIH), 330-353 (CKCT…RVHH), 380-402 (YTCS…QRIH), and 408-430 (HECN…HKMH).

The protein belongs to the krueppel C2H2-type zinc-finger protein family. As to quaternary structure, interacts with VAV1 and CDK4. Interacts with INTS13; promoting association with the integrator complex.

It is found in the nucleus. In terms of biological role, probable transcription factor. This chain is Zinc finger protein 655, found in Homo sapiens (Human).